The primary structure comprises 600 residues: 1,8-cineole synthase 1, chloroplastic (600 aa).

A chloroplast-targeting transit peptide spans 1–31; the sequence is MATLRISSALIYQNTLTHHFRLRRPHRFVCK. Asp-342 contributes to the dimethylallyl diphosphate binding site. The Mg(2+) site is built by Asp-342 and Asp-346. Residues 342–346 carry the DDXXD motif motif; that stretch reads DDIYD. Dimethylallyl diphosphate-binding residues include Glu-420, Arg-484, and Asn-487. Mg(2+)-binding residues include Asn-487, Thr-491, and Glu-495.

It belongs to the terpene synthase family. Tpsb subfamily. Mg(2+) serves as cofactor. Mn(2+) is required as a cofactor. As to expression, predominantly expressed in roots and at much lower levels in siliques. Not found in leaves, flowers or stems. Also detected in flowers in cv. Landsberg erecta. Not expressed in root apical meristem and elongation zone. Found in the vascular system of young roots and additionally in the cortex and epidermal cell layer of older roots.

Its subcellular location is the plastid. The protein resides in the chloroplast. It carries out the reaction (2E)-geranyl diphosphate + H2O = 1,8-cineole + diphosphate. It functions in the pathway secondary metabolite biosynthesis; terpenoid biosynthesis. Functionally, involved in monoterpene (C10) biosynthesis. The major product is 1,8-cineole (52%) followed by minor amounts of sabinene (14.5%), myrcene (13.3%), (-)-(1S)-beta-pinene (7.8%), (-)-(4S)-limonene (4.0%), (E)-beta-ocimene (2.7%), alpha-terpineol (2.4%), (-)-(1S)-alpha-pinene (1.9%), terpinolene (0.8%), and (+)-alpha-thujene (0.6%). This chain is 1,8-cineole synthase 1, chloroplastic (TPS27), found in Arabidopsis thaliana (Mouse-ear cress).